Here is a 229-residue protein sequence, read N- to C-terminus: MQNAFTIDQLPLSWQEQLENEWSQPYMYKLREFLQSEYSQKTIYPAKDNIFTALKSTPFDSVRVVILGQDPYPGEGQAHGLSFSVPQGVRLPPSLVNIFSELHADVGVKNTTGCLQSWADQGILLLNTVLTVRAGSPFSHAGQGWEQFTDAIITKLIENRSHVIFVLWGNAARKTCDLLFRSTHKHAILAAAHPSPLAAHRGFFGCSHFSKINYLLKKLNKPMINWKLP.

Asp70 serves as the catalytic Proton acceptor.

The protein belongs to the uracil-DNA glycosylase (UDG) superfamily. UNG family.

The protein resides in the cytoplasm. It catalyses the reaction Hydrolyzes single-stranded DNA or mismatched double-stranded DNA and polynucleotides, releasing free uracil.. In terms of biological role, excises uracil residues from the DNA which can arise as a result of misincorporation of dUMP residues by DNA polymerase or due to deamination of cytosine. The polypeptide is Uracil-DNA glycosylase (Chlamydia abortus (strain DSM 27085 / S26/3) (Chlamydophila abortus)).